A 614-amino-acid chain; its full sequence is Spastin (614 aa).

Residues 1–45 (MNSPGGRGKKKGSGGPSSPVPPRPPPPCQARSRPAPKPAPPPQSP) are disordered. The required for nuclear localization stretch occupies residues 1-50 (MNSPGGRGKKKGSGGPSSPVPPRPPPPCQARSRPAPKPAPPPQSPHKRNL). The Cytoplasmic segment spans residues 1–56 (MNSPGGRGKKKGSGGPSSPVPPRPPPPCQARSRPAPKPAPPPQSPHKRNLYYFSYP). The segment at 1-80 (MNSPGGRGKK…LGLLFVWLCQ (80 aa)) is required for interaction with ATL1. The required for midbody localization stretch occupies residues 1-192 (MNSPGGRGKK…LVMAKDRLQL (192 aa)). The interval 1 to 298 (MNSPGGRGKK…STPKTNRTNK (298 aa)) is required for interaction with RTN1. The short motif at 4 to 11 (PGGRGKKK) is the Nuclear localization signal element. Composition is skewed to pro residues over residues 18-28 (SPVPPRPPPPC) and 35-44 (APKPAPPPQS). The segment at 50–87 (LYYFSYPLFLGFALLRLVAFHLGLLFVWLCQRFSRALM) is required for interaction with SSNA1 and microtubules. The segment at residues 57-77 (LFLGFALLRLVAFHLGLLFVW) is an intramembrane region (helical). The Nuclear export signal signature appears at 59–67 (LGFALLRLV). Residues 78-614 (LCQRFSRALM…WNKDFGDTTV (537 aa)) are Cytoplasmic-facing. A sufficient for interaction with CHMP1B region spans residues 110-194 (EAERVRAFHK…MAKDRLQLLE (85 aa)). Residues 112–198 (ERVRAFHKQA…RLQLLEKLQP (87 aa)) form a required for interaction with microtubules region. The MIT domain maps to 118–193 (HKQAFEYISV…VMAKDRLQLL (76 aa)). Residues 220–310 (NGHLQSESGA…TPTTAARKKK (91 aa)) form a disordered region. The sufficient for microtubule severing stretch occupies residues 226-614 (ESGAVPKRKD…WNKDFGDTTV (389 aa)). A phosphoserine mark is found at Ser-243 and Ser-266. Residues 268–326 (SGLSMVSGVRQGPGSAAATHKSTPKTNRTNKPSTPTTAARKKKDLKNFRNVDSNLANLI) are required for interaction with microtubules and microtubule severing. Residues 287–304 (HKSTPKTNRTNKPSTPTT) are compositionally biased toward polar residues. Phosphothreonine is present on Thr-304. A Nuclear localization signal motif is present at residues 307-310 (RKKK). 380 to 387 (GPPGNGKT) contacts ATP. The residue at position 595 (Ser-595) is a Phosphoserine.

The protein belongs to the AAA ATPase family. Spastin subfamily. In terms of assembly, homohexamer. Mostly monomeric, but assembles into hexameric structure for short periods of time. Oligomerization seems to be a prerequisite for catalytic activity. Binding to ATP in a cleft between two adjacent subunits stabilizes the homohexameric form. Binds to microtubules at least in part via the alpha-tubulin and beta-tubulin tails. The hexamer adopts a ring conformation through which microtubules pass prior to being severed. Does not interact strongly with tubulin heterodimers. Interacts (via MIT domain) with CHMP1B; the interaction is direct. Interacts with SSNA1. Interacts with ATL1. Interacts with RTN1. Interacts with ZFYVE27. Interacts with REEP1. Interacts (via MIT domain) with IST1.

It is found in the membrane. The protein resides in the endoplasmic reticulum. The protein localises to the midbody. Its subcellular location is the cytoplasm. It localises to the cytoskeleton. It is found in the microtubule organizing center. The protein resides in the centrosome. The protein localises to the perinuclear region. Its subcellular location is the nucleus. It localises to the spindle. It is found in the cell projection. The protein resides in the axon. It carries out the reaction n ATP + n H2O + a microtubule = n ADP + n phosphate + (n+1) alpha/beta tubulin heterodimers.. Allosteric enzyme with a cooperative mechanism; at least two neighbor subunits influence each other strongly in spastin hexamers. Microtubule binding promotes cooperative interactions among spastin subunits. Functionally, ATP-dependent microtubule severing protein that specifically recognizes and cuts microtubules that are polyglutamylated. Preferentially recognizes and acts on microtubules decorated with short polyglutamate tails: severing activity increases as the number of glutamates per tubulin rises from one to eight, but decreases beyond this glutamylation threshold. Severing activity is not dependent on tubulin acetylation or detyrosination. Microtubule severing promotes reorganization of cellular microtubule arrays and the release of microtubules from the centrosome following nucleation. It is critical for the biogenesis and maintenance of complex microtubule arrays in axons, spindles and cilia. SPAST is involved in abscission step of cytokinesis and nuclear envelope reassembly during anaphase in cooperation with the ESCRT-III complex. Recruited at the midbody, probably by IST1, and participates in membrane fission during abscission together with the ESCRT-III complex. Recruited to the nuclear membrane by IST1 and mediates microtubule severing, promoting nuclear envelope sealing and mitotic spindle disassembly during late anaphase. Required for membrane traffic from the endoplasmic reticulum (ER) to the Golgi and endosome recycling. Recruited by IST1 to endosomes and regulates early endosomal tubulation and recycling by mediating microtubule severing. Probably plays a role in axon growth and the formation of axonal branches. This is Spastin from Bos taurus (Bovine).